The following is an 882-amino-acid chain: HTH-type transcriptional regulator AlkS (882 aa).

An ATP-binding site is contributed by 51-58; it reads APPGYGKT. Residues 815 to 880 enclose the HTH luxR-type domain; it reads ENKADALLTR…QATIEAERQG (66 aa). Residues 839-858 constitute a DNA-binding region (H-T-H motif); that stretch reads NKQIATNMHVTEDAIKWHMR.

The protein operates within hydrocarbon metabolism; alkane degradation. Its function is as follows. This protein activates the expression of alkBFGHJKL operon in the presence of alkanes. This chain is HTH-type transcriptional regulator AlkS (alkS), found in Ectopseudomonas oleovorans (Pseudomonas oleovorans).